We begin with the raw amino-acid sequence, 352 residues long: DNA polymerase IV (352 aa).

The UmuC domain maps to 6 to 187 (IIHIDCDCFY…LPVSKLHGVG (182 aa)). The Mg(2+) site is built by Asp10 and Asp105. Residue Glu106 is part of the active site.

This sequence belongs to the DNA polymerase type-Y family. In terms of assembly, monomer. Mg(2+) is required as a cofactor.

Its subcellular location is the cytoplasm. It catalyses the reaction DNA(n) + a 2'-deoxyribonucleoside 5'-triphosphate = DNA(n+1) + diphosphate. Its function is as follows. Poorly processive, error-prone DNA polymerase involved in untargeted mutagenesis. Copies undamaged DNA at stalled replication forks, which arise in vivo from mismatched or misaligned primer ends. These misaligned primers can be extended by PolIV. Exhibits no 3'-5' exonuclease (proofreading) activity. May be involved in translesional synthesis, in conjunction with the beta clamp from PolIII. This chain is DNA polymerase IV, found in Ectopseudomonas mendocina (strain ymp) (Pseudomonas mendocina).